We begin with the raw amino-acid sequence, 214 residues long: Osteoclast-stimulating factor 1 (214 aa).

Residues 12 to 71 (GQVKVFRALYTFEPRTPDELYFEEGDILYIADMSDTNWWKGTCKGKTGLIPSNYVAEQAE) enclose the SH3 domain. ANK repeat units lie at residues 72–101 (SIDNPLHEAAKRGNLSWLRECLENRVGVNG), 105–135 (AGSTALYWGCHGGHKDVVDMLLAQPNIELNQ), and 139–168 (LGDTALHAAAWKGYADIVELLLVKGARTDL).

It localises to the cytoplasm. Its function is as follows. Induces bone resorption, acting probably through a signaling cascade which results in the secretion of factor(s) enhancing osteoclast formation and activity. The protein is Osteoclast-stimulating factor 1 (ostf1) of Xenopus laevis (African clawed frog).